Reading from the N-terminus, the 432-residue chain is Bifunctional protein GlmU (432 aa).

The segment at 1-224 (MSEISVIILA…EENFMGINDK (224 aa)) is pyrophosphorylase. Residues 9 to 12 (LAAG), Lys-23, and 82 to 83 (GT) each bind UDP-N-acetyl-alpha-D-glucosamine. Residue Asp-103 coordinates Mg(2+). Residues Gly-136, Glu-150, Asn-165, and Asn-222 each contribute to the UDP-N-acetyl-alpha-D-glucosamine site. Asn-222 contacts Mg(2+). Positions 225–245 (FALSKAETIIQNEIKENLMKN) are linker. Residues 246-432 (GVLMRLPESI…FFAKFFKEIK (187 aa)) form an N-acetyltransferase region. Positions 309 and 326 each coordinate UDP-N-acetyl-alpha-D-glucosamine. His-337 (proton acceptor) is an active-site residue. UDP-N-acetyl-alpha-D-glucosamine contacts are provided by Tyr-340 and Asn-351. Acetyl-CoA is bound by residues 360 to 361 (NY), Ser-379, Ala-397, and Arg-414.

In the N-terminal section; belongs to the N-acetylglucosamine-1-phosphate uridyltransferase family. It in the C-terminal section; belongs to the transferase hexapeptide repeat family. As to quaternary structure, homotrimer. Requires Mg(2+) as cofactor.

It localises to the cytoplasm. It carries out the reaction alpha-D-glucosamine 1-phosphate + acetyl-CoA = N-acetyl-alpha-D-glucosamine 1-phosphate + CoA + H(+). The catalysed reaction is N-acetyl-alpha-D-glucosamine 1-phosphate + UTP + H(+) = UDP-N-acetyl-alpha-D-glucosamine + diphosphate. It functions in the pathway nucleotide-sugar biosynthesis; UDP-N-acetyl-alpha-D-glucosamine biosynthesis; N-acetyl-alpha-D-glucosamine 1-phosphate from alpha-D-glucosamine 6-phosphate (route II): step 2/2. The protein operates within nucleotide-sugar biosynthesis; UDP-N-acetyl-alpha-D-glucosamine biosynthesis; UDP-N-acetyl-alpha-D-glucosamine from N-acetyl-alpha-D-glucosamine 1-phosphate: step 1/1. It participates in bacterial outer membrane biogenesis; LPS lipid A biosynthesis. Its function is as follows. Catalyzes the last two sequential reactions in the de novo biosynthetic pathway for UDP-N-acetylglucosamine (UDP-GlcNAc). The C-terminal domain catalyzes the transfer of acetyl group from acetyl coenzyme A to glucosamine-1-phosphate (GlcN-1-P) to produce N-acetylglucosamine-1-phosphate (GlcNAc-1-P), which is converted into UDP-GlcNAc by the transfer of uridine 5-monophosphate (from uridine 5-triphosphate), a reaction catalyzed by the N-terminal domain. This is Bifunctional protein GlmU from Campylobacter hominis (strain ATCC BAA-381 / DSM 21671 / CCUG 45161 / LMG 19568 / NCTC 13146 / CH001A).